Here is a 99-residue protein sequence, read N- to C-terminus: Transmembrane protein 14A (99 aa).

3 helical membrane passes run 1-21 (MDLI…FGYK), 24-44 (GGVP…YGAY), and 79-99 (PAGL…LLLL).

Belongs to the TMEM14 family. Expressed at significantly higher levels in ovarian cancer tissues than in normal tissues (at protein level).

It localises to the mitochondrion membrane. It is found in the endoplasmic reticulum membrane. Inhibits apoptosis via negative regulation of the mitochondrial outer membrane permeabilization involved in apoptotic signaling pathway. This Homo sapiens (Human) protein is Transmembrane protein 14A (TMEM14A).